Consider the following 277-residue polypeptide: Indole-3-glycerol phosphate synthase (277 aa).

It belongs to the TrpC family.

The catalysed reaction is 1-(2-carboxyphenylamino)-1-deoxy-D-ribulose 5-phosphate + H(+) = (1S,2R)-1-C-(indol-3-yl)glycerol 3-phosphate + CO2 + H2O. It functions in the pathway amino-acid biosynthesis; L-tryptophan biosynthesis; L-tryptophan from chorismate: step 4/5. The chain is Indole-3-glycerol phosphate synthase from Pseudomonas putida (strain ATCC 700007 / DSM 6899 / JCM 31910 / BCRC 17059 / LMG 24140 / F1).